We begin with the raw amino-acid sequence, 71 residues long: UPF0346 protein SPG_0874 (71 aa).

It belongs to the UPF0346 family.

The chain is UPF0346 protein SPG_0874 from Streptococcus pneumoniae serotype 19F (strain G54).